A 191-amino-acid polypeptide reads, in one-letter code: Crossover junction endodeoxyribonuclease RuvC (191 aa).

Active-site residues include D7, E67, and D141. Residues D7, E67, and D141 each coordinate Mg(2+).

The protein belongs to the RuvC family. In terms of assembly, homodimer which binds Holliday junction (HJ) DNA. The HJ becomes 2-fold symmetrical on binding to RuvC with unstacked arms; it has a different conformation from HJ DNA in complex with RuvA. In the full resolvosome a probable DNA-RuvA(4)-RuvB(12)-RuvC(2) complex forms which resolves the HJ. The cofactor is Mg(2+).

The protein resides in the cytoplasm. It catalyses the reaction Endonucleolytic cleavage at a junction such as a reciprocal single-stranded crossover between two homologous DNA duplexes (Holliday junction).. The RuvA-RuvB-RuvC complex processes Holliday junction (HJ) DNA during genetic recombination and DNA repair. Endonuclease that resolves HJ intermediates. Cleaves cruciform DNA by making single-stranded nicks across the HJ at symmetrical positions within the homologous arms, yielding a 5'-phosphate and a 3'-hydroxyl group; requires a central core of homology in the junction. The consensus cleavage sequence is 5'-(A/T)TT(C/G)-3'. Cleavage occurs on the 3'-side of the TT dinucleotide at the point of strand exchange. HJ branch migration catalyzed by RuvA-RuvB allows RuvC to scan DNA until it finds its consensus sequence, where it cleaves and resolves the cruciform DNA. In Myxococcus xanthus (strain DK1622), this protein is Crossover junction endodeoxyribonuclease RuvC.